A 493-amino-acid polypeptide reads, in one-letter code: Probable cytosol aminopeptidase (493 aa).

Residues lysine 257 and aspartate 262 each contribute to the Mn(2+) site. Lysine 269 is an active-site residue. The Mn(2+) site is built by aspartate 281, aspartate 341, and glutamate 343. The active site involves arginine 345.

This sequence belongs to the peptidase M17 family. Requires Mn(2+) as cofactor.

The protein resides in the cytoplasm. The catalysed reaction is Release of an N-terminal amino acid, Xaa-|-Yaa-, in which Xaa is preferably Leu, but may be other amino acids including Pro although not Arg or Lys, and Yaa may be Pro. Amino acid amides and methyl esters are also readily hydrolyzed, but rates on arylamides are exceedingly low.. It catalyses the reaction Release of an N-terminal amino acid, preferentially leucine, but not glutamic or aspartic acids.. In terms of biological role, presumably involved in the processing and regular turnover of intracellular proteins. Catalyzes the removal of unsubstituted N-terminal amino acids from various peptides. The protein is Probable cytosol aminopeptidase of Synechococcus sp. (strain WH7803).